The chain runs to 373 residues: Muscleblind-like protein 2 (373 aa).

C3H1-type zinc fingers lie at residues 13–41 (WLTLEVCRQFQRGTCSRSDEECKFAHPPK), 47–73 (NGRVIACFDSLKGRCSRENCKYLHPPT), 176–204 (TDKLEVCREFQRGNCARGETDCRFAHPAD), and 212–238 (DNTVTVCMDYIKGRCMREKCKYFHPPA).

It belongs to the muscleblind family. As to quaternary structure, interacts with ITGA3. As to expression, expressed in heart, brain, placenta, lung, liver, skeletal muscle, kidney and pancreas.

It is found in the nucleus. Its subcellular location is the cytoplasm. Functionally, mediates pre-mRNA alternative splicing regulation. Acts either as activator or repressor of splicing on specific pre-mRNA targets. Inhibits cardiac troponin-T (TNNT2) pre-mRNA exon inclusion but induces insulin receptor (IR) pre-mRNA exon inclusion in muscle. Antagonizes the alternative splicing activity pattern of CELF proteins. RNA-binding protein that binds to 5'ACACCC-3' core sequence, termed zipcode, within the 3'UTR of ITGA3. Binds to CUG triplet repeat expansion in myotonic dystrophy muscle cells by sequestering the target RNAs. Together with RNA binding proteins RBPMS and RBFOX2, activates vascular smooth muscle cells alternative splicing events. Regulates NCOR2 alternative splicing. Seems to regulate expression and localization of ITGA3 by transporting it from the nucleus to cytoplasm at adhesion plaques. May play a role in myotonic dystrophy pathophysiology (DM). The protein is Muscleblind-like protein 2 (MBNL2) of Homo sapiens (Human).